We begin with the raw amino-acid sequence, 393 residues long: Putative zinc metalloprotease Rip3 (393 aa).

The next 2 helical transmembrane spans lie at 10-30 and 45-65; these read IAGF…LFTW and AVVY…SLLA. Histidine 66 provides a ligand contact to Zn(2+). Residue glutamate 67 is part of the active site. Histidine 70 is a Zn(2+) binding site. The next 4 helical transmembrane spans lie at 77–97, 108–128, 136–156, and 207–227; these read AGVS…ALGG, IAFA…ALAI, PAIV…LGLF, and FVAG…FIFA. CBS domains are found at residues 251–308 and 315–376; these read MTAQ…RRST and ALPL…AQPE.

The protein belongs to the peptidase M50B family. Requires Zn(2+) as cofactor.

It is found in the cell membrane. The polypeptide is Putative zinc metalloprotease Rip3 (rip3) (Mycobacterium tuberculosis (strain ATCC 35801 / TMC 107 / Erdman)).